We begin with the raw amino-acid sequence, 319 residues long: Inositol phosphoceramide mannosyltransferase 1 (319 aa).

Residues 8-28 (LLLKGIPICGVILLILWGYSL) traverse the membrane as a helical segment. Residues Asn-115 and Asn-198 are each glycosylated (N-linked (GlcNAc...) asparagine). 2 helical membrane-spanning segments follow: residues 211 to 231 (PTVFLSAGPLFLSYQFCKYLL) and 279 to 299 (VLFFAFLAAFAILFLCLRVVF).

Belongs to the glycosyltransferase 32 family.

The protein resides in the golgi apparatus. Its subcellular location is the cis-Golgi network membrane. It localises to the trans-Golgi network membrane. Functionally, with imt2 and imt3, is required for the synthesis of mannosyl phosphorylinositol ceramide (MIPC). Catalyzes the addition of mannosyl to phosphorylinositol ceramide (IPC). MIPC is essential for cell morphology, cell-surface distribution of ergosterol, localization for plasma-membrane transporters, and lipid-raft-mediated endocytosis of plasma membrane proteins to the vacuole. The sequence is that of Inositol phosphoceramide mannosyltransferase 1 (imt1) from Schizosaccharomyces pombe (strain 972 / ATCC 24843) (Fission yeast).